Consider the following 533-residue polypeptide: E3 ubiquitin-protein ligase arih1l (533 aa).

Disordered stretches follow at residues 1-35 (MDSD…EAVD) and 48-73 (PAVA…QEDE). The segment at 158-369 (QDLPCQICYL…SAWYNCNRYN (212 aa)) is TRIAD supradomain. Zn(2+) is bound by residues C162, C165, C179, H181, C184, C187, C207, C212, C252, C257, C273, C275, C280, C283, H288, C293, C320, and C323. An RING-type 1 zinc finger spans residues 162-212 (CQICYLNYPNSYFTGLECGHKFCMQCWGDYLTTKIIEEGMGQTISCPAHNC). An IBR-type zinc finger spans residues 232-293 (LKYQHLITNS…GENWHDPVKC (62 aa)). The RING-type 2; atypical zinc finger occupies 320–351 (CPKCHVTIEKDGGCNHMVCRNQNCKAEFCWVC). C333 is an active-site residue. Zn(2+) contacts are provided by C338, C343, C348, C351, H358, and C365. Residues 409 to 425 (KLYAQVKQKMEEMQQHN) are a coiled coil.

Belongs to the RBR family. Ariadne subfamily.

It localises to the cytoplasm. It catalyses the reaction [E2 ubiquitin-conjugating enzyme]-S-ubiquitinyl-L-cysteine + [acceptor protein]-L-lysine = [E2 ubiquitin-conjugating enzyme]-L-cysteine + [acceptor protein]-N(6)-ubiquitinyl-L-lysine.. The protein operates within protein modification; protein ubiquitination. In terms of biological role, E3 ubiquitin-protein ligase, which catalyzes polyubiquitination of target proteins together with ubiquitin-conjugating enzyme E2 ube2l3. The chain is E3 ubiquitin-protein ligase arih1l (arih1l) from Danio rerio (Zebrafish).